The primary structure comprises 332 residues: tRNA uridine(34) hydroxylase (332 aa).

The region spanning 127 to 221 (SDPETVLIDT…YLEEVPKEKS (95 aa)) is the Rhodanese domain. Cys181 serves as the catalytic Cysteine persulfide intermediate. The segment at 308–332 (AKKLAQLNKQKKQQAKEAARKKAQQ) is disordered. Residues 321-332 (QAKEAARKKAQQ) show a composition bias toward basic and acidic residues.

Belongs to the TrhO family.

It catalyses the reaction uridine(34) in tRNA + AH2 + O2 = 5-hydroxyuridine(34) in tRNA + A + H2O. Catalyzes oxygen-dependent 5-hydroxyuridine (ho5U) modification at position 34 in tRNAs. This Francisella tularensis subsp. tularensis (strain FSC 198) protein is tRNA uridine(34) hydroxylase.